The sequence spans 387 residues: S-adenosylmethionine synthase (387 aa).

His16 is a binding site for ATP. Asp18 contributes to the Mg(2+) binding site. Glu44 serves as a coordination point for K(+). L-methionine is bound by residues Glu57 and Gln100. A flexible loop region spans residues 100–110; it reads QSPDIAQGVDE. ATP is bound by residues 167-169, 232-233, Asp241, 247-248, Ala264, and Lys268; these read DAK, RF, and RK. An L-methionine-binding site is contributed by Asp241. Lys272 contacts L-methionine.

The protein belongs to the AdoMet synthase family. As to quaternary structure, homotetramer; dimer of dimers. Mg(2+) serves as cofactor. K(+) is required as a cofactor.

Its subcellular location is the cytoplasm. It catalyses the reaction L-methionine + ATP + H2O = S-adenosyl-L-methionine + phosphate + diphosphate. The protein operates within amino-acid biosynthesis; S-adenosyl-L-methionine biosynthesis; S-adenosyl-L-methionine from L-methionine: step 1/1. In terms of biological role, catalyzes the formation of S-adenosylmethionine (AdoMet) from methionine and ATP. The overall synthetic reaction is composed of two sequential steps, AdoMet formation and the subsequent tripolyphosphate hydrolysis which occurs prior to release of AdoMet from the enzyme. The chain is S-adenosylmethionine synthase from Janthinobacterium sp. (strain Marseille) (Minibacterium massiliensis).